Reading from the N-terminus, the 222-residue chain is 7-cyano-7-deazaguanine synthase (222 aa).

9–19 (LSGGLDSATAA) is an ATP binding site. Residues C190, C198, C201, and C204 each contribute to the Zn(2+) site.

This sequence belongs to the QueC family. The cofactor is Zn(2+).

The enzyme catalyses 7-carboxy-7-deazaguanine + NH4(+) + ATP = 7-cyano-7-deazaguanine + ADP + phosphate + H2O + H(+). It participates in purine metabolism; 7-cyano-7-deazaguanine biosynthesis. In terms of biological role, catalyzes the ATP-dependent conversion of 7-carboxy-7-deazaguanine (CDG) to 7-cyano-7-deazaguanine (preQ(0)). The chain is 7-cyano-7-deazaguanine synthase from Synechococcus sp. (strain RCC307).